A 257-amino-acid chain; its full sequence is MADS-box transcription factor 1 (257 aa).

Residues 1-61 (MGRGKVELKR…GRLFEFSSSS (61 aa)) enclose the MADS-box domain. Positions 85 to 175 (NEINYQEYLK…RKKLQETSAE (91 aa)) constitute a K-box domain.

In terms of assembly, may interact with the K-box of MADS6, MADS14 and MADS15.

The protein localises to the nucleus. Probable transcription factor involved in the development of floral organs. Required for the formation of inner floral organs (lodicules, stamens and carpels, or whorls 2, 3 and 4) and the lemma and palea (whorl 1), which are grass floral organs analogous to sepals. May be involved in the control of flowering time. Seems to act as transcriptional activator. May act upstream of the auxin-responsive protein GH3.8. In Oryza sativa subsp. indica (Rice), this protein is MADS-box transcription factor 1 (MADS1).